The sequence spans 364 residues: tRNA-specific 2-thiouridylase MnmA 1 (364 aa).

ATP-binding positions include 10–17 and Met-36; that span reads GMSGGVDS. Cys-106 functions as the Nucleophile in the catalytic mechanism. Cys-106 and Cys-204 are disulfide-bonded. Position 130 (Gly-130) interacts with ATP. The interaction with tRNA stretch occupies residues 154 to 156; that stretch reads KDQ. The Cysteine persulfide intermediate role is filled by Cys-204. The interval 310–311 is interaction with tRNA; that stretch reads RY.

This sequence belongs to the MnmA/TRMU family.

It localises to the cytoplasm. The enzyme catalyses S-sulfanyl-L-cysteinyl-[protein] + uridine(34) in tRNA + AH2 + ATP = 2-thiouridine(34) in tRNA + L-cysteinyl-[protein] + A + AMP + diphosphate + H(+). Its function is as follows. Catalyzes the 2-thiolation of uridine at the wobble position (U34) of tRNA, leading to the formation of s(2)U34. This Caldanaerobacter subterraneus subsp. tengcongensis (strain DSM 15242 / JCM 11007 / NBRC 100824 / MB4) (Thermoanaerobacter tengcongensis) protein is tRNA-specific 2-thiouridylase MnmA 1.